A 72-amino-acid chain; its full sequence is MGNRPLDILNDALNTSVIVRLKGAREFRGVLQGYDVHMNLVLDEAEELKDGEIVRKIGGVVIRGDNVVYVSP.

The region spanning 4 to 72 (RPLDILNDAL…RGDNVVYVSP (69 aa)) is the Sm domain.

Belongs to the snRNP Sm proteins family.

The polypeptide is Putative snRNP Sm-like protein (Methanococcoides burtonii (strain DSM 6242 / NBRC 107633 / OCM 468 / ACE-M)).